Consider the following 190-residue polypeptide: MKLLEDKIKSEGIVLPNNVLKVDGFLNHQVDAQLMFEIGKEFGRLFKKQNVTKILTVESSGIAPAVMTGLAMDVPVVFARKHKSLTLTDDLYTASVYSYTKQTSNQISISKRFIDEKDRVLIIDDFLANGQAVSGLLDIADAANIDVVGVGIVIEKTFQKGSQIIKDRDIQLESLARIKALTDDGQVEFE.

Positions 20 and 27 each coordinate xanthine. 5-phospho-alpha-D-ribose 1-diphosphate is bound at residue Ala-128–Ala-132. Lys-156 lines the xanthine pocket.

It belongs to the purine/pyrimidine phosphoribosyltransferase family. Xpt subfamily. In terms of assembly, homodimer.

The protein localises to the cytoplasm. It catalyses the reaction XMP + diphosphate = xanthine + 5-phospho-alpha-D-ribose 1-diphosphate. The protein operates within purine metabolism; XMP biosynthesis via salvage pathway; XMP from xanthine: step 1/1. Converts the preformed base xanthine, a product of nucleic acid breakdown, to xanthosine 5'-monophosphate (XMP), so it can be reused for RNA or DNA synthesis. The protein is Xanthine phosphoribosyltransferase of Pediococcus pentosaceus (strain ATCC 25745 / CCUG 21536 / LMG 10740 / 183-1w).